We begin with the raw amino-acid sequence, 518 residues long: Protein nucleotidyltransferase YdiU (518 aa).

Residues 1 to 10 (MTHLRFDNRL) are compositionally biased toward basic and acidic residues. Positions 1–23 (MTHLRFDNRLRQQLPGDPEEGSR) are disordered. 8 residues coordinate ATP: Gly100, Gly102, Arg103, Lys123, Asp135, Gly136, Arg193, and Arg200. Catalysis depends on Asp270, which acts as the Proton acceptor. Mg(2+) contacts are provided by Asn271 and Asp280. An ATP-binding site is contributed by Asp280.

The protein belongs to the SELO family. Mg(2+) serves as cofactor. It depends on Mn(2+) as a cofactor.

It catalyses the reaction L-seryl-[protein] + ATP = 3-O-(5'-adenylyl)-L-seryl-[protein] + diphosphate. It carries out the reaction L-threonyl-[protein] + ATP = 3-O-(5'-adenylyl)-L-threonyl-[protein] + diphosphate. The enzyme catalyses L-tyrosyl-[protein] + ATP = O-(5'-adenylyl)-L-tyrosyl-[protein] + diphosphate. The catalysed reaction is L-histidyl-[protein] + UTP = N(tele)-(5'-uridylyl)-L-histidyl-[protein] + diphosphate. It catalyses the reaction L-seryl-[protein] + UTP = O-(5'-uridylyl)-L-seryl-[protein] + diphosphate. It carries out the reaction L-tyrosyl-[protein] + UTP = O-(5'-uridylyl)-L-tyrosyl-[protein] + diphosphate. Nucleotidyltransferase involved in the post-translational modification of proteins. It can catalyze the addition of adenosine monophosphate (AMP) or uridine monophosphate (UMP) to a protein, resulting in modifications known as AMPylation and UMPylation. The sequence is that of Protein nucleotidyltransferase YdiU from Xanthomonas axonopodis pv. citri (strain 306).